The following is a 186-amino-acid chain: Glutathione S-transferase 1, isoform A (186 aa).

Residues 1 to 81 enclose the GST N-terminal domain; sequence MDFYYLPGSA…YLVEKYCAHD (81 aa). Residues Ser-9, 50–52, and 65–67 each bind glutathione; these read HCI and ESR. The 95-residue stretch at 92–186 folds into the GST C-terminal domain; that stretch reads DPRRRAVVHQ…RRCRVRSAAI (95 aa).

The protein belongs to the GST superfamily. Theta family. Homodimer.

It catalyses the reaction RX + glutathione = an S-substituted glutathione + a halide anion + H(+). Conjugation of reduced glutathione to a wide number of exogenous and endogenous hydrophobic electrophiles. The polypeptide is Glutathione S-transferase 1, isoform A (Anopheles gambiae (African malaria mosquito)).